Here is a 324-residue protein sequence, read N- to C-terminus: Acetyl-coenzyme A carboxylase carboxyl transferase subunit beta (324 aa).

Over residues 1 to 16 (MTKNNNDLSNSSSNPP) the composition is skewed to low complexity. A disordered region spans residues 1 to 51 (MTKNNNDLSNSSSNPPSNRPVAGKEAELEIQRETHAAQSGQSESWLSRPIP). Residues 22–35 (AGKEAELEIQRETH) show a composition bias toward basic and acidic residues. Positions 36 to 45 (AAQSGQSESW) are enriched in polar residues. A CoA carboxyltransferase N-terminal domain is found at 68-324 (PSTECPQCHS…YRLLAKLTHV (257 aa)). 4 residues coordinate Zn(2+): Cys-72, Cys-75, Cys-91, and Cys-94. A C4-type zinc finger spans residues 72-94 (CPQCHSMITNTALIFNAYVCPHC).

This sequence belongs to the AccD/PCCB family. Acetyl-CoA carboxylase is a heterohexamer composed of biotin carboxyl carrier protein (AccB), biotin carboxylase (AccC) and two subunits each of ACCase subunit alpha (AccA) and ACCase subunit beta (AccD). It depends on Zn(2+) as a cofactor.

The protein localises to the cytoplasm. The enzyme catalyses N(6)-carboxybiotinyl-L-lysyl-[protein] + acetyl-CoA = N(6)-biotinyl-L-lysyl-[protein] + malonyl-CoA. The protein operates within lipid metabolism; malonyl-CoA biosynthesis; malonyl-CoA from acetyl-CoA: step 1/1. Functionally, component of the acetyl coenzyme A carboxylase (ACC) complex. Biotin carboxylase (BC) catalyzes the carboxylation of biotin on its carrier protein (BCCP) and then the CO(2) group is transferred by the transcarboxylase to acetyl-CoA to form malonyl-CoA. The protein is Acetyl-coenzyme A carboxylase carboxyl transferase subunit beta of Psychrobacter sp. (strain PRwf-1).